The chain runs to 288 residues: Elongation factor Ts (288 aa).

An involved in Mg(2+) ion dislocation from EF-Tu region spans residues 82–85 (TDFV).

The protein belongs to the EF-Ts family.

Its subcellular location is the cytoplasm. Its function is as follows. Associates with the EF-Tu.GDP complex and induces the exchange of GDP to GTP. It remains bound to the aminoacyl-tRNA.EF-Tu.GTP complex up to the GTP hydrolysis stage on the ribosome. The chain is Elongation factor Ts from Chlorobaculum parvum (strain DSM 263 / NCIMB 8327) (Chlorobium vibrioforme subsp. thiosulfatophilum).